A 319-amino-acid chain; its full sequence is Cutinase cut1 (319 aa).

Residues 1-58 (MPPHAARPGPAQNRRGRAMAVITPRRERSSLLSRALRFTAAAATALVTAVSLAAPAHA) form the signal peptide. Residue tyrosine 118 coordinates poly(ethylene terephthalate). The active-site Nucleophile is serine 188. Poly(ethylene terephthalate) is bound by residues methionine 189 and tryptophan 213. Active-site charge relay system residues include aspartate 234 and histidine 266. Cysteine 299 and cysteine 317 are joined by a disulfide.

It belongs to the AB hydrolase superfamily.

The protein resides in the secreted. It is found in the periplasm. It carries out the reaction an acetyl ester + H2O = an aliphatic alcohol + acetate + H(+). It catalyses the reaction a butanoate ester + H2O = an aliphatic alcohol + butanoate + H(+). The enzyme catalyses pentanoate ester + H2O = pentanoate + an aliphatic alcohol + H(+). The catalysed reaction is an octanoate ester + H2O = an aliphatic alcohol + octanoate + H(+). It carries out the reaction decanoate ester + H2O = decanoate + an aliphatic alcohol + H(+). It catalyses the reaction a dodecanoate ester + H2O = an aliphatic alcohol + dodecanoate + H(+). The enzyme catalyses a tetradecanoate ester + H2O = an aliphatic alcohol + tetradecanoate + H(+). The catalysed reaction is hexadecanoate ester + H2O = an aliphatic alcohol + hexadecanoate + H(+). It carries out the reaction cutin + H2O = cutin monomers.. It catalyses the reaction (ethylene terephthalate)(n) + H2O = (ethylene terephthalate)(n-1) + 4-[(2-hydroxyethoxy)carbonyl]benzoate + H(+). With respect to regulation, activated by magnesium ions. Activated by calcium ions. Functionally, catalyzes the hydrolysis of cutin, a polyester that forms the structure of plant cuticle. Shows esterase activity towards p-nitrophenol-linked aliphatic esters (pNP-aliphatic esters). Capable of degrading the plastic poly(ethylene terephthalate) (PET), the most abundant polyester plastic in the world. This chain is Cutinase cut1, found in Thermobifida fusca (Thermomonospora fusca).